We begin with the raw amino-acid sequence, 563 residues long: Alpha-keto-acid decarboxylase (563 aa).

E59 lines the thiamine diphosphate pocket. The tract at residues 348 to 367 is disordered; it reads SPPVASPPAEPLPPPPPREQ. Positions 351–366 are enriched in pro residues; that stretch reads VASPPAEPLPPPPPRE. The interval 394–476 is thiamine pyrophosphate binding; it reads TSFYGMADHR…VVVNNDGYTV (83 aa). 3 residues coordinate Mg(2+): D444, N471, and G473.

The protein belongs to the TPP enzyme family. Requires a metal cation as cofactor. The cofactor is thiamine diphosphate.

Decarboxylates branched-chain and aromatic alpha-keto acids to aldehydes. In Mycobacterium avium (strain 104), this protein is Alpha-keto-acid decarboxylase (kdc).